A 277-amino-acid chain; its full sequence is MMDLWTAAQALILGVVEGLTEFLPISSTGHQIIVADLIDFGGERAMAFNIIIQLGAILAVVWEFRRKILDVVTGLPKQQQAQRFTLNLLIAFMPAVVLGVIFADTIHHYLFNAITVATALVVGGVIMLWAERREHTVRTETVDDMTWSDALKVGLVQCLAMIPGTSRSGSTIIGGLLFGLSRKAATEFSFFLAMPTMVGAAVYSGYKYRDMFRPDDFAVFAIGFITSFIFAMIAVRALLKFIATHSYAVFAWYRIAFGLLILATWQFGWIDWASAKA.

Helical transmembrane passes span 5–25 (WTAA…FLPI), 44–64 (RAMA…VWEF), 86–106 (LNLL…ADTI), 110–130 (LFNA…MLWA), 184–204 (AATE…AVYS), 219–239 (VFAI…RALL), and 255–275 (IAFG…WASA).

This sequence belongs to the UppP family.

It localises to the cell inner membrane. It carries out the reaction di-trans,octa-cis-undecaprenyl diphosphate + H2O = di-trans,octa-cis-undecaprenyl phosphate + phosphate + H(+). Catalyzes the dephosphorylation of undecaprenyl diphosphate (UPP). Confers resistance to bacitracin. This Pseudomonas savastanoi pv. phaseolicola (strain 1448A / Race 6) (Pseudomonas syringae pv. phaseolicola (strain 1448A / Race 6)) protein is Undecaprenyl-diphosphatase.